Reading from the N-terminus, the 1140-residue chain is Protein FAM184A (1140 aa).

Coiled-coil stretches lie at residues 57 to 256, 296 to 800, and 868 to 907; these read ALNT…NKAQ, AILR…IEME, and RITD…LEFK. Residues 1063–1128 form a disordered region; the sequence is PNLSALESGG…EASPVASPDP (66 aa).

It belongs to the FAM184 family.

It is found in the cytoplasm. The protein localises to the P-body. It localises to the cytoskeleton. The protein resides in the microtubule organizing center. Its subcellular location is the centrosome. It is found in the centriolar satellite. This chain is Protein FAM184A, found in Homo sapiens (Human).